A 309-amino-acid polypeptide reads, in one-letter code: Porphobilinogen deaminase (309 aa).

An S-(dipyrrolylmethanemethyl)cysteine modification is found at C240.

It belongs to the HMBS family. As to quaternary structure, monomer. The cofactor is dipyrromethane.

It catalyses the reaction 4 porphobilinogen + H2O = hydroxymethylbilane + 4 NH4(+). It participates in porphyrin-containing compound metabolism; protoporphyrin-IX biosynthesis; coproporphyrinogen-III from 5-aminolevulinate: step 2/4. In terms of biological role, tetrapolymerization of the monopyrrole PBG into the hydroxymethylbilane pre-uroporphyrinogen in several discrete steps. This Chromobacterium violaceum (strain ATCC 12472 / DSM 30191 / JCM 1249 / CCUG 213 / NBRC 12614 / NCIMB 9131 / NCTC 9757 / MK) protein is Porphobilinogen deaminase.